We begin with the raw amino-acid sequence, 452 residues long: Trigger factor (452 aa).

The PPIase FKBP-type domain maps to 170 to 255 (GDRVTIDFTG…VKSVAAPGPL (86 aa)).

This sequence belongs to the FKBP-type PPIase family. Tig subfamily.

Its subcellular location is the cytoplasm. The enzyme catalyses [protein]-peptidylproline (omega=180) = [protein]-peptidylproline (omega=0). Involved in protein export. Acts as a chaperone by maintaining the newly synthesized protein in an open conformation. Functions as a peptidyl-prolyl cis-trans isomerase. The polypeptide is Trigger factor (Xanthobacter autotrophicus (strain ATCC BAA-1158 / Py2)).